Consider the following 377-residue polypeptide: Nitric oxide reductase FlRd-NAD(+) reductase (377 aa).

The protein belongs to the FAD-dependent oxidoreductase family. FAD serves as cofactor.

Its subcellular location is the cytoplasm. It catalyses the reaction 2 reduced [nitric oxide reductase rubredoxin domain] + NAD(+) + H(+) = 2 oxidized [nitric oxide reductase rubredoxin domain] + NADH. The protein operates within nitrogen metabolism; nitric oxide reduction. Its function is as follows. One of at least two accessory proteins for anaerobic nitric oxide (NO) reductase. Reduces the rubredoxin moiety of NO reductase. This Citrobacter koseri (strain ATCC BAA-895 / CDC 4225-83 / SGSC4696) protein is Nitric oxide reductase FlRd-NAD(+) reductase.